Consider the following 637-residue polypeptide: Chaperone protein DnaK (637 aa).

Thr198 bears the Phosphothreonine; by autocatalysis mark. The segment at 600–637 (IAQQQAQAQQAQGADAGAQSKDDDVVDAEFEEVKDDKK) is disordered. Positions 601–618 (AQQQAQAQQAQGADAGAQ) are enriched in low complexity. The span at 623 to 637 (DVVDAEFEEVKDDKK) shows a compositional bias: acidic residues.

Belongs to the heat shock protein 70 family.

Its function is as follows. Acts as a chaperone. In Vibrio parahaemolyticus serotype O3:K6 (strain RIMD 2210633), this protein is Chaperone protein DnaK.